A 438-amino-acid chain; its full sequence is Aspartate--tRNA(Asp) ligase (438 aa).

Glu170 lines the L-aspartate pocket. Residues 192–195 are aspartate; that stretch reads QLYK. Arg214 serves as a coordination point for L-aspartate. ATP contacts are provided by residues 214–216, 222–224, and Glu361; these read RAE and RHL. Mg(2+) contacts are provided by Glu361 and Ser364. L-aspartate contacts are provided by Ser364 and Arg368. 409 to 412 is an ATP binding site; that stretch reads GAER.

It belongs to the class-II aminoacyl-tRNA synthetase family. Type 2 subfamily. Homodimer. The cofactor is Mg(2+).

Its subcellular location is the cytoplasm. The catalysed reaction is tRNA(Asp) + L-aspartate + ATP = L-aspartyl-tRNA(Asp) + AMP + diphosphate. Its function is as follows. Catalyzes the attachment of L-aspartate to tRNA(Asp) in a two-step reaction: L-aspartate is first activated by ATP to form Asp-AMP and then transferred to the acceptor end of tRNA(Asp). This is Aspartate--tRNA(Asp) ligase from Pyrococcus horikoshii (strain ATCC 700860 / DSM 12428 / JCM 9974 / NBRC 100139 / OT-3).